We begin with the raw amino-acid sequence, 180 residues long: Ribosome rescue factor SmrB (180 aa).

One can recognise a Smr domain in the interval 98–173 (LDLHGLTQLI…GDAALLLLVE (76 aa)).

Belongs to the SmrB family. Associates with collided ribosomes, but not with correctly translating polysomes.

Functionally, acts as a ribosome collision sensor. Detects stalled/collided disomes (pairs of ribosomes where the leading ribosome is stalled and a second ribosome has collided with it) and endonucleolytically cleaves mRNA at the 5' boundary of the stalled ribosome. Stalled/collided disomes form a new interface (primarily via the 30S subunits) that binds SmrB. Cleaved mRNA becomes available for tmRNA ligation, leading to ribosomal subunit dissociation and rescue of stalled ribosomes. This is Ribosome rescue factor SmrB from Proteus mirabilis (strain HI4320).